We begin with the raw amino-acid sequence, 400 residues long: Elongation factor Tu (400 aa).

The tr-type G domain occupies 10-209 (KPHVNIGTIG…NVDAYIPTPE (200 aa)). The G1 stretch occupies residues 19 to 26 (GHVDHGKT). 19 to 26 (GHVDHGKT) contacts GTP. T26 is a Mg(2+) binding site. The tract at residues 60-64 (GITIN) is G2. Residues 81-84 (DCPG) form a G3 region. Residues 81–85 (DCPGH) and 136–139 (NKSD) each bind GTP. Positions 136–139 (NKSD) are G4. Residues 174 to 176 (SGL) are G5.

The protein belongs to the TRAFAC class translation factor GTPase superfamily. Classic translation factor GTPase family. EF-Tu/EF-1A subfamily. As to quaternary structure, monomer.

It is found in the cytoplasm. It carries out the reaction GTP + H2O = GDP + phosphate + H(+). GTP hydrolase that promotes the GTP-dependent binding of aminoacyl-tRNA to the A-site of ribosomes during protein biosynthesis. The chain is Elongation factor Tu from Desulforamulus reducens (strain ATCC BAA-1160 / DSM 100696 / MI-1) (Desulfotomaculum reducens).